We begin with the raw amino-acid sequence, 584 residues long: uncharacterized protein (584 aa).

Disordered stretches follow at residues 123–156 (LSCS…PSSP), 209–264 (KIVT…INGG), and 355–479 (STQL…ITPT). Low complexity-rich tracts occupy residues 237–260 (SLSF…PKSS) and 366–376 (SISAATTTTIT). 2 stretches are compositionally biased toward polar residues: residues 377 to 388 (PHNNNSTMTTKT) and 395 to 419 (DTSN…STTP). The span at 425-479 (MSMTPLSSSSSSSTTPSKFINPLPSSSSKTTTTITNSKRLSTLSKPSPITPITPT) shows a compositional bias: low complexity.

This is an uncharacterized protein from Dictyostelium discoideum (Social amoeba).